The chain runs to 498 residues: Glycerol kinase (498 aa).

Threonine 11 is an ADP binding site. The ATP site is built by threonine 11, serine 12, and serine 13. Threonine 11 contacts sn-glycerol 3-phosphate. Arginine 15 serves as a coordination point for ADP. Arginine 81, glutamate 82, tyrosine 133, and aspartate 242 together coordinate sn-glycerol 3-phosphate. Residues arginine 81, glutamate 82, tyrosine 133, aspartate 242, and glutamine 243 each contribute to the glycerol site. ADP-binding residues include threonine 264 and glycine 307. Residues threonine 264, glycine 307, glutamine 311, and glycine 412 each contribute to the ATP site. ADP contacts are provided by glycine 412 and asparagine 416.

The protein belongs to the FGGY kinase family.

The catalysed reaction is glycerol + ATP = sn-glycerol 3-phosphate + ADP + H(+). The protein operates within polyol metabolism; glycerol degradation via glycerol kinase pathway; sn-glycerol 3-phosphate from glycerol: step 1/1. Inhibited by fructose 1,6-bisphosphate (FBP). Functionally, key enzyme in the regulation of glycerol uptake and metabolism. Catalyzes the phosphorylation of glycerol to yield sn-glycerol 3-phosphate. This is Glycerol kinase from Delftia acidovorans (strain DSM 14801 / SPH-1).